Here is a 474-residue protein sequence, read N- to C-terminus: ATP synthase subunit beta (474 aa).

Residue 155–162 coordinates ATP; it reads GGAGVGKT.

Belongs to the ATPase alpha/beta chains family. In terms of assembly, F-type ATPases have 2 components, CF(1) - the catalytic core - and CF(0) - the membrane proton channel. CF(1) has five subunits: alpha(3), beta(3), gamma(1), delta(1), epsilon(1). CF(0) has three main subunits: a(1), b(2) and c(9-12). The alpha and beta chains form an alternating ring which encloses part of the gamma chain. CF(1) is attached to CF(0) by a central stalk formed by the gamma and epsilon chains, while a peripheral stalk is formed by the delta and b chains.

It is found in the cell inner membrane. It catalyses the reaction ATP + H2O + 4 H(+)(in) = ADP + phosphate + 5 H(+)(out). Its function is as follows. Produces ATP from ADP in the presence of a proton gradient across the membrane. The catalytic sites are hosted primarily by the beta subunits. In Sorangium cellulosum (strain So ce56) (Polyangium cellulosum (strain So ce56)), this protein is ATP synthase subunit beta.